Reading from the N-terminus, the 594-residue chain is Arginine--tRNA ligase (594 aa).

The 'HIGH' region signature appears at 139–149; it reads ANPTGPLHVGH.

Belongs to the class-I aminoacyl-tRNA synthetase family. As to quaternary structure, monomer.

The protein resides in the cytoplasm. It carries out the reaction tRNA(Arg) + L-arginine + ATP = L-arginyl-tRNA(Arg) + AMP + diphosphate. The sequence is that of Arginine--tRNA ligase from Burkholderia pseudomallei (strain 1106a).